The chain runs to 463 residues: NADH dehydrogenase [ubiquinone] iron-sulfur protein 2, mitochondrial (463 aa).

Residues 1-33 (MAALRVLCGLRGVAAQVLRPGAGVRLPIQPSRG) constitute a mitochondrion transit peptide. Lys62 carries the post-translational modification N6-acetyllysine. Arg118 carries the post-translational modification Symmetric dimethylarginine. Residues Cys326, Cys332, and Cys347 each coordinate [4Fe-4S] cluster.

The protein belongs to the complex I 49 kDa subunit family. In terms of assembly, core subunit of respiratory chain NADH dehydrogenase (Complex I) which is composed of 45 different subunits. Component of the iron-sulfur (IP) fragment of the enzyme. Interacts with NDUFAF3. Interacts with NDUFAF7. Interacts with CERS2. Requires [4Fe-4S] cluster as cofactor. Dimethylation at Arg-118 by NDUFAF7 takes place after NDUFS2 assembles into the complex I, leading to stabilize the early intermediate complex.

Its subcellular location is the mitochondrion inner membrane. The catalysed reaction is a ubiquinone + NADH + 5 H(+)(in) = a ubiquinol + NAD(+) + 4 H(+)(out). Core subunit of the mitochondrial membrane respiratory chain NADH dehydrogenase (Complex I) which catalyzes electron transfer from NADH through the respiratory chain, using ubiquinone as an electron acceptor. Essential for the catalytic activity and assembly of complex I. Redox-sensitive, critical component of the oxygen-sensing pathway in the pulmonary vasculature which plays a key role in acute pulmonary oxygen-sensing and hypoxic pulmonary vasoconstriction. Plays an important role in carotid body sensing of hypoxia. Essential for glia-like neural stem and progenitor cell proliferation, differentiation and subsequent oligodendrocyte or neuronal maturation. This chain is NADH dehydrogenase [ubiquinone] iron-sulfur protein 2, mitochondrial (NDUFS2), found in Gorilla gorilla gorilla (Western lowland gorilla).